We begin with the raw amino-acid sequence, 314 residues long: Probable cell division protein WhiA (314 aa).

The segment at residues 282-314 (SLKELGELCRPPVSKSGAAHRMRQLMALAESLE) is a DNA-binding region (H-T-H motif).

This sequence belongs to the WhiA family.

Functionally, involved in cell division and chromosome segregation. In Symbiobacterium thermophilum (strain DSM 24528 / JCM 14929 / IAM 14863 / T), this protein is Probable cell division protein WhiA.